A 143-amino-acid polypeptide reads, in one-letter code: Peptide methionine sulfoxide reductase MsrB (143 aa).

The MsrB domain occupies 16 to 139 (DAELRRRLTP…NSAALNFESR (124 aa)). Residues C55, C58, C104, and C107 each contribute to the Zn(2+) site. The active-site Nucleophile is C128.

The protein belongs to the MsrB Met sulfoxide reductase family. Zn(2+) is required as a cofactor.

It carries out the reaction L-methionyl-[protein] + [thioredoxin]-disulfide + H2O = L-methionyl-(R)-S-oxide-[protein] + [thioredoxin]-dithiol. This is Peptide methionine sulfoxide reductase MsrB from Burkholderia ambifaria (strain ATCC BAA-244 / DSM 16087 / CCUG 44356 / LMG 19182 / AMMD) (Burkholderia cepacia (strain AMMD)).